Here is a 126-residue protein sequence, read N- to C-terminus: Ribosome-binding factor A (126 aa).

Belongs to the RbfA family. As to quaternary structure, monomer. Binds 30S ribosomal subunits, but not 50S ribosomal subunits or 70S ribosomes.

The protein resides in the cytoplasm. In terms of biological role, one of several proteins that assist in the late maturation steps of the functional core of the 30S ribosomal subunit. Associates with free 30S ribosomal subunits (but not with 30S subunits that are part of 70S ribosomes or polysomes). Required for efficient processing of 16S rRNA. May interact with the 5'-terminal helix region of 16S rRNA. This Haemophilus ducreyi (strain 35000HP / ATCC 700724) protein is Ribosome-binding factor A.